The sequence spans 334 residues: Phosphate acyltransferase (334 aa).

Belongs to the PlsX family. In terms of assembly, homodimer. Probably interacts with PlsY.

The protein resides in the cytoplasm. The catalysed reaction is a fatty acyl-[ACP] + phosphate = an acyl phosphate + holo-[ACP]. Its pathway is lipid metabolism; phospholipid metabolism. Functionally, catalyzes the reversible formation of acyl-phosphate (acyl-PO(4)) from acyl-[acyl-carrier-protein] (acyl-ACP). This enzyme utilizes acyl-ACP as fatty acyl donor, but not acyl-CoA. The sequence is that of Phosphate acyltransferase from Streptococcus thermophilus (strain CNRZ 1066).